The following is a 479-amino-acid chain: Glutamyl-tRNA(Gln) amidotransferase subunit A (479 aa).

Active-site charge relay system residues include Lys-71 and Ser-146. Ser-170 functions as the Acyl-ester intermediate in the catalytic mechanism.

The protein belongs to the amidase family. GatA subfamily. As to quaternary structure, heterotrimer of A, B and C subunits.

The enzyme catalyses L-glutamyl-tRNA(Gln) + L-glutamine + ATP + H2O = L-glutaminyl-tRNA(Gln) + L-glutamate + ADP + phosphate + H(+). Its function is as follows. Allows the formation of correctly charged Gln-tRNA(Gln) through the transamidation of misacylated Glu-tRNA(Gln) in organisms which lack glutaminyl-tRNA synthetase. The reaction takes place in the presence of glutamine and ATP through an activated gamma-phospho-Glu-tRNA(Gln). This Lactobacillus johnsonii (strain CNCM I-12250 / La1 / NCC 533) protein is Glutamyl-tRNA(Gln) amidotransferase subunit A.